Reading from the N-terminus, the 200-residue chain is Orotate phosphoribosyltransferase (200 aa).

5-phospho-alpha-D-ribose 1-diphosphate is bound by residues R95, K99, H101, and 121 to 129; that span reads DDVATTGGS. Residues T125 and R153 each contribute to the orotate site.

It belongs to the purine/pyrimidine phosphoribosyltransferase family. PyrE subfamily. In terms of assembly, homodimer. Mg(2+) is required as a cofactor.

The enzyme catalyses orotidine 5'-phosphate + diphosphate = orotate + 5-phospho-alpha-D-ribose 1-diphosphate. It participates in pyrimidine metabolism; UMP biosynthesis via de novo pathway; UMP from orotate: step 1/2. Catalyzes the transfer of a ribosyl phosphate group from 5-phosphoribose 1-diphosphate to orotate, leading to the formation of orotidine monophosphate (OMP). The chain is Orotate phosphoribosyltransferase from Cenarchaeum symbiosum (strain A).